The primary structure comprises 288 residues: Nucleotide-binding protein Tola_2941 (288 aa).

8 to 15 lines the ATP pocket; sequence GRSGSGKT. 56-59 lines the GTP pocket; sequence DVRN.

It belongs to the RapZ-like family.

In terms of biological role, displays ATPase and GTPase activities. This Tolumonas auensis (strain DSM 9187 / NBRC 110442 / TA 4) protein is Nucleotide-binding protein Tola_2941.